Reading from the N-terminus, the 69-residue chain is uncharacterized protein (69 aa).

The interval 48 to 69 is disordered; that stretch reads EADDVKPRKGRKPKAVSDADKD.

This is an uncharacterized protein from Salmonella phage P22 (Bacteriophage P22).